We begin with the raw amino-acid sequence, 662 residues long: DNA ligase (662 aa).

NAD(+)-binding positions include 32–36 (DAEYD), 75–76 (SL), and E106. K108 functions as the N6-AMP-lysine intermediate in the catalytic mechanism. NAD(+)-binding residues include R129, E164, K271, and K295. Residues C389, C392, C407, and C413 each contribute to the Zn(2+) site. Positions 580–662 (SSNSVLNNKI…HKVISLGVFK (83 aa)) constitute a BRCT domain.

The protein belongs to the NAD-dependent DNA ligase family. LigA subfamily. The cofactor is Mg(2+). Mn(2+) is required as a cofactor.

It catalyses the reaction NAD(+) + (deoxyribonucleotide)n-3'-hydroxyl + 5'-phospho-(deoxyribonucleotide)m = (deoxyribonucleotide)n+m + AMP + beta-nicotinamide D-nucleotide.. Functionally, DNA ligase that catalyzes the formation of phosphodiester linkages between 5'-phosphoryl and 3'-hydroxyl groups in double-stranded DNA using NAD as a coenzyme and as the energy source for the reaction. It is essential for DNA replication and repair of damaged DNA. This Wolbachia pipientis wMel protein is DNA ligase.